The primary structure comprises 210 residues: Large ribosomal subunit protein uL4 (210 aa).

Polar residues predominate over residues 47–64 (SRQGTRSQKSRSEVSGSN). The interval 47–83 (SRQGTRSQKSRSEVSGSNKKPWRQKGTGRARSGSVKS) is disordered.

Belongs to the universal ribosomal protein uL4 family. Part of the 50S ribosomal subunit.

One of the primary rRNA binding proteins, this protein initially binds near the 5'-end of the 23S rRNA. It is important during the early stages of 50S assembly. It makes multiple contacts with different domains of the 23S rRNA in the assembled 50S subunit and ribosome. Its function is as follows. Forms part of the polypeptide exit tunnel. This chain is Large ribosomal subunit protein uL4, found in Blochmanniella pennsylvanica (strain BPEN).